A 230-amino-acid polypeptide reads, in one-letter code: Sugar fermentation stimulation protein homolog (230 aa).

It belongs to the SfsA family.

The sequence is that of Sugar fermentation stimulation protein homolog from Clostridium perfringens (strain 13 / Type A).